The sequence spans 475 residues: tRNA-2-methylthio-N(6)-dimethylallyladenosine synthase (475 aa).

The 121-residue stretch at 7–127 (RKLHIKSYGC…LPKLLAKARD (121 aa)) folds into the MTTase N-terminal domain. 6 residues coordinate [4Fe-4S] cluster: C16, C52, C90, C168, C172, and C175. The Radical SAM core domain occupies 154-388 (RARGVSAFVT…AQLQALIDAQ (235 aa)). Positions 394–456 (RAAIGRTVEV…RYSLKGRLAS (63 aa)) constitute a TRAM domain.

The protein belongs to the methylthiotransferase family. MiaB subfamily. Monomer. It depends on [4Fe-4S] cluster as a cofactor.

Its subcellular location is the cytoplasm. The catalysed reaction is N(6)-dimethylallyladenosine(37) in tRNA + (sulfur carrier)-SH + AH2 + 2 S-adenosyl-L-methionine = 2-methylsulfanyl-N(6)-dimethylallyladenosine(37) in tRNA + (sulfur carrier)-H + 5'-deoxyadenosine + L-methionine + A + S-adenosyl-L-homocysteine + 2 H(+). Its function is as follows. Catalyzes the methylthiolation of N6-(dimethylallyl)adenosine (i(6)A), leading to the formation of 2-methylthio-N6-(dimethylallyl)adenosine (ms(2)i(6)A) at position 37 in tRNAs that read codons beginning with uridine. The chain is tRNA-2-methylthio-N(6)-dimethylallyladenosine synthase from Afipia carboxidovorans (strain ATCC 49405 / DSM 1227 / KCTC 32145 / OM5) (Oligotropha carboxidovorans).